The sequence spans 305 residues: tRNA pseudouridine synthase B (305 aa).

The active-site Nucleophile is aspartate 39.

It belongs to the pseudouridine synthase TruB family. Type 1 subfamily.

The catalysed reaction is uridine(55) in tRNA = pseudouridine(55) in tRNA. Functionally, responsible for synthesis of pseudouridine from uracil-55 in the psi GC loop of transfer RNAs. This chain is tRNA pseudouridine synthase B, found in Staphylococcus haemolyticus (strain JCSC1435).